Consider the following 237-residue polypeptide: D-aminoacyl-tRNA deacylase (237 aa).

Belongs to the DtdA deacylase family. In terms of assembly, monomer. The cofactor is Zn(2+).

It catalyses the reaction a D-aminoacyl-tRNA + H2O = a tRNA + a D-alpha-amino acid + H(+). The enzyme catalyses glycyl-tRNA(Ala) + H2O = tRNA(Ala) + glycine + H(+). Functionally, D-aminoacyl-tRNA deacylase with broad substrate specificity. By recycling D-aminoacyl-tRNA to D-amino acids and free tRNA molecules, this enzyme counteracts the toxicity associated with the formation of D-aminoacyl-tRNA entities in vivo. This Saccharolobus islandicus (strain Y.N.15.51 / Yellowstone #2) (Sulfolobus islandicus) protein is D-aminoacyl-tRNA deacylase.